A 302-amino-acid chain; its full sequence is D-alanine--D-alanine ligase (302 aa).

Residues 100 to 295 (KTVFDHHGIL…FNELIAKLIE (196 aa)) enclose the ATP-grasp domain. Residue 126–180 (QDLEPPVFIKPNSGGSSLGMTFARTAEELEKGIETVFSLGDSALVEEYTKGIEVT) coordinates ATP. D250, E262, and N264 together coordinate Mg(2+).

It belongs to the D-alanine--D-alanine ligase family. The cofactor is Mg(2+). Mn(2+) is required as a cofactor.

The protein localises to the cytoplasm. It carries out the reaction 2 D-alanine + ATP = D-alanyl-D-alanine + ADP + phosphate + H(+). It participates in cell wall biogenesis; peptidoglycan biosynthesis. Cell wall formation. The chain is D-alanine--D-alanine ligase from Maridesulfovibrio salexigens (strain ATCC 14822 / DSM 2638 / NCIMB 8403 / VKM B-1763) (Desulfovibrio salexigens).